The primary structure comprises 175 residues: tRNA-acetylating toxin 3 (175 aa).

Residues L95, V97, G103, G105, G107, A108, D133, Q138, D141, and W142 each coordinate acetyl-CoA. The active site involves Y143. The acetyl-CoA site is built by G145 and F146.

Belongs to the acetyltransferase family. GNAT subfamily. In terms of assembly, homodimer (in absence of antitoxin); has a condensed and elongated form. Forms a complex with cognate antitoxin TacA3. Forms a 4:2 antitoxin:toxin complex with cognate antitoxin TacA3. Forms a 4:4 antitoxin:toxin complex with promoter DNA, where 2 TacT3 dimers bridge 2 TacA3 dimers. Only TacA3 contacts promoter DNA in the octomeric form. TacT3 may contact DNA in the hexameric form.

It carries out the reaction glycyl-tRNA(Gly) + acetyl-CoA = N-acetylglycyl-tRNA(Gly) + CoA + H(+). Functionally, toxic component of a type II toxin-antitoxin (TA) system. Acetylates tRNA and inhibits translation. Acetylates only Gly-tRNA on all 3 Gly-tRNA(Gly) isoacceptors in situ. In vitro acetylates mainly Ile/Leu and Gly. Overexpression during the lag phase of a tacA3-tacT3 deletion strain leads to a 150-fold increase in persister cells in the presence of cefotaxime and a non-growth state in the absence of antibiotic. Persister cell formation and the growth defect are neutralized by cognate antitoxin TacA3, but not by TacA1 or TacA2. Plays a role in persister cell formation. Its function is as follows. The TacA3-TacT3 complex both represses and derepresses expression of its own operon. The hexameric 4:2 TacA3-TacT3 complex binds promoter DNA and represses its transcription; both subunits are required. The octomeric 4:4 TacA3-TacT3 complex derepresses the operon. The shift from hexameric to octomeric complex probably alters DNA-binding, leading to dissociation from the operator DNA and derepression. The sequence is that of tRNA-acetylating toxin 3 from Salmonella typhimurium (strain 14028s / SGSC 2262).